The sequence spans 554 residues: Phenylalanine--tRNA ligase beta subunit (554 aa).

The B5 domain occupies 274 to 351; the sequence is LTPDSAEITI…INYGYENFNG (78 aa). Mg(2+) is bound by residues D329, D335, and D339.

It belongs to the phenylalanyl-tRNA synthetase beta subunit family. Type 2 subfamily. In terms of assembly, tetramer of two alpha and two beta subunits. Requires Mg(2+) as cofactor.

The protein localises to the cytoplasm. It carries out the reaction tRNA(Phe) + L-phenylalanine + ATP = L-phenylalanyl-tRNA(Phe) + AMP + diphosphate + H(+). The chain is Phenylalanine--tRNA ligase beta subunit from Methanococcus aeolicus (strain ATCC BAA-1280 / DSM 17508 / OCM 812 / Nankai-3).